The sequence spans 453 residues: Phosphatidylserine decarboxylase proenzyme 1, mitochondrial (453 aa).

Residues 1–29 (MKPRFPQNVYFLARYSYLRRFQHSQRRTF) constitute a mitochondrion transit peptide. At 30 to 74 (SSFLNNIRSNYSGARASPLGGSSGAGAGAGGGGTGDSKGNAFLVP) the chain is on the mitochondrial matrix side. A helical membrane pass occupies residues 75 to 93 (GATMATILMLGALHARRLY). The Mitochondrial intermembrane segment spans residues 94–453 (EDKKIEEKRE…GQALGRWKEE (360 aa)). Active-site charge relay system; for autoendoproteolytic cleavage activity residues include aspartate 199, histidine 296, and serine 408. Serine 408 serves as the catalytic Schiff-base intermediate with substrate; via pyruvic acid; for decarboxylase activity. At serine 408 the chain carries Pyruvic acid (Ser); by autocatalysis.

It belongs to the phosphatidylserine decarboxylase family. PSD-B subfamily. Eukaryotic type I sub-subfamily. As to quaternary structure, heterodimer of a large membrane-associated beta subunit and a small pyruvoyl-containing alpha subunit. Pyruvate is required as a cofactor. Post-translationally, is synthesized initially as an inactive proenzyme. Formation of the active enzyme involves a self-maturation process in which the active site pyruvoyl group is generated from an internal serine residue via an autocatalytic post-translational modification. Two non-identical subunits are generated from the proenzyme in this reaction, and the pyruvate is formed at the N-terminus of the alpha chain, which is derived from the carboxyl end of the proenzyme. The autoendoproteolytic cleavage occurs by a canonical serine protease mechanism, in which the side chain hydroxyl group of the serine supplies its oxygen atom to form the C-terminus of the beta chain, while the remainder of the serine residue undergoes an oxidative deamination to produce ammonia and the pyruvoyl prosthetic group on the alpha chain. During this reaction, the Ser that is part of the protease active site of the proenzyme becomes the pyruvoyl prosthetic group, which constitutes an essential element of the active site of the mature decarboxylase. In terms of tissue distribution, expressed in roots, leaves, stems and flowers.

The protein localises to the mitochondrion. Its subcellular location is the mitochondrion inner membrane. It catalyses the reaction a 1,2-diacyl-sn-glycero-3-phospho-L-serine + H(+) = a 1,2-diacyl-sn-glycero-3-phosphoethanolamine + CO2. The protein operates within phospholipid metabolism; phosphatidylethanolamine biosynthesis; phosphatidylethanolamine from CDP-diacylglycerol: step 2/2. Functionally, catalyzes the formation of phosphatidylethanolamine (PtdEtn) from phosphatidylserine (PtdSer). Plays a central role in phospholipid metabolism and in the interorganelle trafficking of phosphatidylserine. Contributes only to a minor proportion of PtdEtn production. In Arabidopsis thaliana (Mouse-ear cress), this protein is Phosphatidylserine decarboxylase proenzyme 1, mitochondrial (PSD1).